The chain runs to 752 residues: Complement C2 (752 aa).

The first 20 residues, 1-20, serve as a signal peptide directing secretion; that stretch reads MGPLMVLFCLLFLYPGLADS. Sushi domains follow at residues 22–86, 87–146, and 149–206; these read PSCP…VCKP, VRCP…VCDN, and GHCP…ICRQ. 6 cysteine pairs are disulfide-bonded: Cys24-Cys64, Cys51-Cys84, Cys89-Cys131, Cys117-Cys144, Cys151-Cys191, and Cys177-Cys204. An N-linked (GlcNAc...) asparagine glycan is attached at Asn29. Asn112 carries an N-linked (GlcNAc...) asparagine glycan. One can recognise a VWFA domain in the interval 254–452; that stretch reads NLYLLLDCSQ…KALHQVFEHM (199 aa). Positions 260-264 match the MIDAS-like motif motif; that stretch reads DCSQS. Residues Ser262 and Ser264 each contribute to the Mg(2+) site. Mn(2+)-binding residues include Ser262 and Ser264. Residues Asn290 and Asn333 are each glycosylated (N-linked (GlcNAc...) asparagine). Thr337 contacts Mg(2+). Thr337 provides a ligand contact to Mn(2+). Cystine bridges form between Cys463–Cys581, Cys492–Cys508, and Cys584–Cys600. Positions 464–744 constitute a Peptidase S1 domain; sequence GVGNMSANAS…MQPWLRQHLG (281 aa). N-linked (GlcNAc...) asparagine glycosylation is found at Asn467 and Asn471. Catalysis depends on charge relay system residues His507 and Asp561. An N-linked (GlcNAc...) asparagine glycan is attached at Asn621. Intrachain disulfides connect Cys638–Cys665 and Cys675–Cys705. N-linked (GlcNAc...) (complex) asparagine glycosylation is present at Asn651. The active-site Charge relay system is the Ser679.

It belongs to the peptidase S1 family. Serine protease component of the C3 convertase, also named C4bC2b, composed of the serine protease complement C2b and complement C4b. Serine protease component of the C5 convertase, also named C4bC2bC3b, composed of the serine protease complement C2b, complement C3b, as well as complement C4b. In terms of assembly, (Microbial infection) Interacts with Schistosoma haematobium TOR (via N-terminal extracellular domain). This results in inhibition of the classical and lectin pathway of complement activation, probably due to interference with binding of C2a to C4b such that C3 convertase cannot be formed. This infers resistance to complement-mediated cell lysis, allowing parasite survival and infection. It depends on Mg(2+) as a cofactor. Mn(2+) is required as a cofactor. In terms of processing, cleaved and activated by different proteases depending on the complement pathway to generate complement C2a and serine protease complement C2b chains. Cleaved and activated by C1S following activation by the classical complement system. Cleaved and activated by MASP2 following activation by the lectin complement system. Cleaved and activated by GZMK following activation by the GZMK complement system.

Its subcellular location is the secreted. It localises to the cell surface. The enzyme catalyses Selective cleavage of Arg-|-Ser bond in complement component C3 alpha-chain to form C3a and C3b, and Arg-|-Xaa bond in complement component C5 alpha-chain to form C5a and C5b.. Its function is as follows. Precursor of the catalytic component of the C3 and C5 convertase complexes, which are part of the complement pathway, a cascade of proteins that leads to phagocytosis and breakdown of pathogens and signaling that strengthens the adaptive immune system. Component C2 is part of the classical, lectin and GZMK complement systems. Catalytic component of the complement C3 and C5 convertase complexes. Following complement activation, recruited to the surface of pathogens by complement C4b opsonin to form the C3 convertase, or C3b and C4b opsonins to form the C5 convertase. As part of the C3 convertase, cleaves and activate C3 into C3a anaphylatoxin and C3b opsonin, the next components of the complement pathways. As part of the C5 convertase, cleaves and activate C5 into C5a anaphylatoxin and C5b component of the membrane attack complex. The sequence is that of Complement C2 from Homo sapiens (Human).